Reading from the N-terminus, the 92-residue chain is Small ribosomal subunit protein bS18 (92 aa).

It belongs to the bacterial ribosomal protein bS18 family. As to quaternary structure, part of the 30S ribosomal subunit. Forms a tight heterodimer with protein bS6.

Functionally, binds as a heterodimer with protein bS6 to the central domain of the 16S rRNA, where it helps stabilize the platform of the 30S subunit. The polypeptide is Small ribosomal subunit protein bS18 (Cupriavidus taiwanensis (strain DSM 17343 / BCRC 17206 / CCUG 44338 / CIP 107171 / LMG 19424 / R1) (Ralstonia taiwanensis (strain LMG 19424))).